Consider the following 130-residue polypeptide: Histone H2A type 2 (130 aa).

Positions 1-22 are disordered; sequence MSGRGKQGGKTRAKSKTRSSRA. The residue at position 2 (serine 2) is an N-acetylserine. Serine 2 is modified (phosphoserine). N6-(2-hydroxyisobutyryl)lysine is present on lysine 6. An N6-acetyllysine modification is found at lysine 6. Over residues 7–19 the composition is skewed to basic residues; sequence QGGKTRAKSKTRS. At lysine 10 the chain carries N6-(2-hydroxyisobutyryl)lysine; alternate. Position 10 is an N6-lactoyllysine; alternate (lysine 10). An N6-succinyllysine modification is found at lysine 10. Glycyl lysine isopeptide (Lys-Gly) (interchain with G-Cter in ubiquitin) cross-links involve residues lysine 14 and lysine 16. Lysine 37 bears the N6-(2-hydroxyisobutyryl)lysine; alternate mark. The residue at position 76 (lysine 76) is an N6-(2-hydroxyisobutyryl)lysine. Lysine 96 is subject to N6-(2-hydroxyisobutyryl)lysine; alternate. Lysine 96 is modified (N6-succinyllysine). Lysine 96 carries the N6-glutaryllysine; alternate modification. An N5-methylglutamine modification is found at glutamine 105. The residue at position 119 (lysine 119) is an N6-(2-hydroxyisobutyryl)lysine; alternate. Lysine 119 is modified (N6-glutaryllysine; alternate). Lysine 120 is covalently cross-linked (Glycyl lysine isopeptide (Lys-Gly) (interchain with G-Cter in ubiquitin)).

The protein belongs to the histone H2A family. The nucleosome is a histone octamer containing two molecules each of H2A, H2B, H3 and H4 assembled in one H3-H4 heterotetramer and two H2A-H2B heterodimers. The octamer wraps approximately 147 bp of DNA. Post-translationally, monoubiquitination of Lys-120 (H2AK119Ub) gives a specific tag for epigenetic transcriptional repression. Following DNA double-strand breaks (DSBs), it is ubiquitinated through 'Lys-63' linkage of ubiquitin moieties, leading to the recruitment of repair proteins to sites of DNA damage. H2AK119Ub and ionizing radiation-induced 'Lys-63'-linked ubiquitination are distinct events. In terms of processing, phosphorylation on Ser-2 is enhanced during mitosis. Phosphorylation on Ser-2 directly represses transcription. Glutamine methylation at Gln-105 (H2AQ104me) by FBL is specifically dedicated to polymerase I. It is present at 35S ribosomal DNA locus and impairs binding of the FACT complex.

Its subcellular location is the nucleus. The protein localises to the chromosome. Its function is as follows. Core component of nucleosome. Nucleosomes wrap and compact DNA into chromatin, limiting DNA accessibility to the cellular machineries which require DNA as a template. Histones thereby play a central role in transcription regulation, DNA repair, DNA replication and chromosomal stability. DNA accessibility is regulated via a complex set of post-translational modifications of histones, also called histone code, and nucleosome remodeling. The protein is Histone H2A type 2 of Xenopus laevis (African clawed frog).